The following is a 174-amino-acid chain: Shikimate kinase (174 aa).

An ATP-binding site is contributed by 15–20; that stretch reads GTGKST. Residue serine 19 participates in Mg(2+) binding. 3 residues coordinate substrate: aspartate 37, arginine 61, and glycine 82. An ATP-binding site is contributed by arginine 120. Arginine 138 is a substrate binding site.

The protein belongs to the shikimate kinase family. As to quaternary structure, monomer. Mg(2+) is required as a cofactor.

It localises to the cytoplasm. It carries out the reaction shikimate + ATP = 3-phosphoshikimate + ADP + H(+). Its pathway is metabolic intermediate biosynthesis; chorismate biosynthesis; chorismate from D-erythrose 4-phosphate and phosphoenolpyruvate: step 5/7. In terms of biological role, catalyzes the specific phosphorylation of the 3-hydroxyl group of shikimic acid using ATP as a cosubstrate. In Staphylococcus aureus (strain MRSA252), this protein is Shikimate kinase.